We begin with the raw amino-acid sequence, 97 residues long: Protein GLUTAMINE DUMPER 7 (97 aa).

The Extracellular segment spans residues Met1–Lys25. A helical membrane pass occupies residues Ile26–Ala46. Topologically, residues Cys47–Ala97 are cytoplasmic. The VIMAG signature appears at Val78–Gly82.

The protein belongs to the GLUTAMINE DUMPER 1 (TC 9.B.60) family. Expressed in the vascular tissues, even in the minor veins of the leaves.

The protein resides in the membrane. Functionally, probable subunit of an amino acid transporter involved in the regulation of the amino acid metabolism. Stimulates amino acid export by activating nonselective amino acid facilitators. The polypeptide is Protein GLUTAMINE DUMPER 7 (GDU7) (Arabidopsis thaliana (Mouse-ear cress)).